The primary structure comprises 279 residues: Diaminopimelate epimerase (279 aa).

Positions 11 and 64 each coordinate substrate. Cys-73 (proton donor) is an active-site residue. Residues 74–75, Asn-170, and 187–188 contribute to the substrate site; these read GN and ER. The active-site Proton acceptor is the Cys-196. 197-198 contacts substrate; it reads GS. The interval 255-279 is disordered; that stretch reads NTDHQRRRHSLSRSPSGRPRLQECR.

Belongs to the diaminopimelate epimerase family. Homodimer.

The protein localises to the cytoplasm. It catalyses the reaction (2S,6S)-2,6-diaminopimelate = meso-2,6-diaminopimelate. The protein operates within amino-acid biosynthesis; L-lysine biosynthesis via DAP pathway; DL-2,6-diaminopimelate from LL-2,6-diaminopimelate: step 1/1. Its function is as follows. Catalyzes the stereoinversion of LL-2,6-diaminopimelate (L,L-DAP) to meso-diaminopimelate (meso-DAP), a precursor of L-lysine. The polypeptide is Diaminopimelate epimerase (Methanopyrus kandleri (strain AV19 / DSM 6324 / JCM 9639 / NBRC 100938)).